The primary structure comprises 309 residues: Lactamase-like protein aptB (309 aa).

His97, His99, Asp101, and His102 together coordinate Zn(2+). The Proton donor/acceptor role is filled by Asp101.

The protein belongs to the metallo-beta-lactamase superfamily. The cofactor is Zn(2+).

It carries out the reaction 2,3,6,8,9-pentahydroxy-1-oxo-3-(2-oxopropyl)-1,2,3,4-tetrahydroanthracene-2-carboxyl-[ACP] + H2O = 2,3,6,8,9-pentahydroxy-1-oxo-3-(2-oxopropyl)-1,2,3,4-tetrahydroanthracene-2-carboxylate + holo-[ACP] + H(+). The protein operates within secondary metabolite biosynthesis. Its function is as follows. Lactamase-like protein; part of the gene cluster that mediates the biosynthesis of asperthecin, an anthraquinone pigment. Polyketide synthase (PKS) aptA catalyzes the formation of the aromatic polyketide from acetyl coenzyme A and seven malonyl coenzyme A molecules. Polyketide is subsequently hydrolyzed by the action of aptB into endocrocin-9-anthrone. Endocrocin-9-anthrone is then oxidized into endocrocin by aptC. Endocrocin is likely to decarboxylate spontaneously to form emodin which explains why there is no decarboxylase in the asperthecin biosynthesis cluster. Finally, aptC or another endogenous oxygenase catalyzes additional oxidation steps to form asperthecin. The sequence is that of Lactamase-like protein aptB from Emericella nidulans (strain FGSC A4 / ATCC 38163 / CBS 112.46 / NRRL 194 / M139) (Aspergillus nidulans).